Here is a 24-residue protein sequence, read N- to C-terminus: Erythromycin resistance leader peptide (24 aa).

Positions 1 to 14 are enriched in low complexity; the sequence is MSMGIAARPPRAAL. The disordered stretch occupies residues 1-24; it reads MSMGIAARPPRAALLPPPSVPRSR. A compositionally biased stretch (pro residues) spans 15–24; it reads LPPPSVPRSR.

Functionally, this peptide is involved in the control mechanism of the synthesis of the macrolide-lincosamide-streptogramin B resistance protein. The protein is Erythromycin resistance leader peptide of Streptomyces fradiae (Streptomyces roseoflavus).